Consider the following 247-residue polypeptide: MyoD family inhibitor domain-containing protein (247 aa).

Disordered stretches follow at residues 1–67 (MSCA…NPSA) and 80–110 (QLQT…GNGI). The region spanning 74–247 (QPERLPQLQT…MECCGICFPS (174 aa)) is the MDFI domain. A phosphoserine mark is found at S129 and S141.

It belongs to the MDFI family. Interacts with HAND1; the interaction sequesters Hand1 into the nucleolus and inhibits its activity. Interacts (via C-terminus) with ZIC2. Interacts (via C-terminus) with AXIN1, the histidine-rich region of CCNT1/cyclin-T and weakly with LEF1. Interacts with CCNT2. Interacts with GATA2. Interacts (via C-terminus) with Piezo channel composed of PIEZO1 or PIEZO2; the interaction prolongs Piezo channel inactivation. Post-translationally, palmitoylated. In the embryo, robust expression is detected between 16.5 and 18.5 dpc in lung, kidney, and salivary glands. In the developing cardiovascular system, it is detected in lymphatic and cardiac valves (at protein level).

Its subcellular location is the cytoplasm. It is found in the secreted. Functionally, required to control the activity of various transcription factors through their sequestration in the cytoplasm. Retains nuclear Zic proteins ZIC1, ZIC2 and ZIC3 in the cytoplasm and inhibits their transcriptional activation. Modulates the expression from cellular promoters. Binds to the axin complex, resulting in an increase in the level of free beta-catenin. Affects axin-regulation of the WNT and JNK signaling pathways. Involved in the development of lymphatic vessel valves. Required to promote lymphatic endothelial cell migration, in a process that involves down-regulation of integrin beta 1 activation and control of cell adhesion to the extracellular matrix. Regulates the activity of mechanosensitive Piezo channel. The polypeptide is MyoD family inhibitor domain-containing protein (Mus musculus (Mouse)).